The sequence spans 21 residues: Nigrocin-2HSa (21 aa).

Cys-15 and Cys-21 form a disulfide bridge.

As to expression, expressed by the skin glands.

The protein localises to the secreted. Functionally, has antibacterial activity against the Gram-positive bacterium S.aureus ATCC 25923 (MIC=56 uM) and the Gram-negative bacterium E.coli ATCC 25726 (MIC=28 uM). The polypeptide is Nigrocin-2HSa (Odorrana hosii (Hose's rock frog)).